The primary structure comprises 320 residues: ATP-dependent 6-phosphofructokinase (320 aa).

Glycine 12 lines the ATP pocket. Residues 22-26 (RGVVR) and 55-60 (RYSVSD) each bind ADP. ATP contacts are provided by residues 73-74 (RF) and 103-106 (GDGS). Aspartate 104 contributes to the Mg(2+) binding site. 126–128 (TID) contributes to the substrate binding site. Catalysis depends on aspartate 128, which acts as the Proton acceptor. An ADP-binding site is contributed by arginine 155. Residues arginine 163 and 170–172 (MGR) contribute to the substrate site. Residues 186–188 (GCE), lysine 212, and 214–216 (KKH) each bind ADP. Substrate contacts are provided by residues glutamate 223, arginine 244, and 250–253 (HIQR).

This sequence belongs to the phosphofructokinase type A (PFKA) family. ATP-dependent PFK group I subfamily. Prokaryotic clade 'B1' sub-subfamily. Homotetramer. Mg(2+) is required as a cofactor.

The protein resides in the cytoplasm. It catalyses the reaction beta-D-fructose 6-phosphate + ATP = beta-D-fructose 1,6-bisphosphate + ADP + H(+). Its pathway is carbohydrate degradation; glycolysis; D-glyceraldehyde 3-phosphate and glycerone phosphate from D-glucose: step 3/4. Allosterically activated by ADP and other diphosphonucleosides, and allosterically inhibited by phosphoenolpyruvate. Catalyzes the phosphorylation of D-fructose 6-phosphate to fructose 1,6-bisphosphate by ATP, the first committing step of glycolysis. In Enterobacter cloacae, this protein is ATP-dependent 6-phosphofructokinase.